Consider the following 333-residue polypeptide: Holliday junction branch migration complex subunit RuvB (333 aa).

The large ATPase domain (RuvB-L) stretch occupies residues 1–182; the sequence is MDERLLSGES…FGVLSRLEYY (182 aa). Residues L21, R22, G63, K66, T67, T68, 129-131, R172, Y182, and R219 each bind ATP; that span reads EDF. T67 is a binding site for Mg(2+). A small ATPAse domain (RuvB-S) region spans residues 183 to 253; the sequence is TVDQLSAIVE…ITQMALELLQ (71 aa). The interval 256 to 333 is head domain (RuvB-H); the sequence is KLGLDHIDHK…QHFGMEMPKI (78 aa). 2 residues coordinate DNA: R311 and R316.

The protein belongs to the RuvB family. In terms of assembly, homohexamer. Forms an RuvA(8)-RuvB(12)-Holliday junction (HJ) complex. HJ DNA is sandwiched between 2 RuvA tetramers; dsDNA enters through RuvA and exits via RuvB. An RuvB hexamer assembles on each DNA strand where it exits the tetramer. Each RuvB hexamer is contacted by two RuvA subunits (via domain III) on 2 adjacent RuvB subunits; this complex drives branch migration. In the full resolvosome a probable DNA-RuvA(4)-RuvB(12)-RuvC(2) complex forms which resolves the HJ.

The protein localises to the cytoplasm. It carries out the reaction ATP + H2O = ADP + phosphate + H(+). Its function is as follows. The RuvA-RuvB-RuvC complex processes Holliday junction (HJ) DNA during genetic recombination and DNA repair, while the RuvA-RuvB complex plays an important role in the rescue of blocked DNA replication forks via replication fork reversal (RFR). RuvA specifically binds to HJ cruciform DNA, conferring on it an open structure. The RuvB hexamer acts as an ATP-dependent pump, pulling dsDNA into and through the RuvAB complex. RuvB forms 2 homohexamers on either side of HJ DNA bound by 1 or 2 RuvA tetramers; 4 subunits per hexamer contact DNA at a time. Coordinated motions by a converter formed by DNA-disengaged RuvB subunits stimulates ATP hydrolysis and nucleotide exchange. Immobilization of the converter enables RuvB to convert the ATP-contained energy into a lever motion, pulling 2 nucleotides of DNA out of the RuvA tetramer per ATP hydrolyzed, thus driving DNA branch migration. The RuvB motors rotate together with the DNA substrate, which together with the progressing nucleotide cycle form the mechanistic basis for DNA recombination by continuous HJ branch migration. Branch migration allows RuvC to scan DNA until it finds its consensus sequence, where it cleaves and resolves cruciform DNA. The chain is Holliday junction branch migration complex subunit RuvB from Bacillus cytotoxicus (strain DSM 22905 / CIP 110041 / 391-98 / NVH 391-98).